We begin with the raw amino-acid sequence, 311 residues long: DNA repair and recombination protein RadA (311 aa).

Gly-104–Ser-111 is a binding site for ATP.

It belongs to the eukaryotic RecA-like protein family.

In terms of biological role, involved in DNA repair and in homologous recombination. Binds and assemble on single-stranded DNA to form a nucleoprotein filament. Hydrolyzes ATP in a ssDNA-dependent manner and promotes DNA strand exchange between homologous DNA molecules. The polypeptide is DNA repair and recombination protein RadA (Methanobrevibacter smithii (strain ATCC 35061 / DSM 861 / OCM 144 / PS)).